Reading from the N-terminus, the 397-residue chain is Protein ROH1D (397 aa).

Residues 247 to 267 traverse the membrane as a helical segment; sequence LIVPVYTMTTVLLFVMWALVA.

This sequence belongs to the ROH1 family. As to quaternary structure, interacts with EXO70C2. Mostly expressed in mature pollen.

The protein resides in the membrane. Its subcellular location is the cytoplasm. It is found in the cytosol. Functionally, involved in the regulation of plant growth, and modulates pollen development to ensure male fertility. May also affect the composition of the inner seed coat mucilage layer. The chain is Protein ROH1D from Arabidopsis thaliana (Mouse-ear cress).